The sequence spans 258 residues: Acyl-[acyl-carrier-protein]--UDP-N-acetylglucosamine O-acyltransferase (258 aa).

Belongs to the transferase hexapeptide repeat family. LpxA subfamily. As to quaternary structure, homotrimer.

The protein resides in the cytoplasm. The enzyme catalyses a (3R)-hydroxyacyl-[ACP] + UDP-N-acetyl-alpha-D-glucosamine = a UDP-3-O-[(3R)-3-hydroxyacyl]-N-acetyl-alpha-D-glucosamine + holo-[ACP]. It participates in glycolipid biosynthesis; lipid IV(A) biosynthesis; lipid IV(A) from (3R)-3-hydroxytetradecanoyl-[acyl-carrier-protein] and UDP-N-acetyl-alpha-D-glucosamine: step 1/6. Its function is as follows. Involved in the biosynthesis of lipid A, a phosphorylated glycolipid that anchors the lipopolysaccharide to the outer membrane of the cell. The chain is Acyl-[acyl-carrier-protein]--UDP-N-acetylglucosamine O-acyltransferase from Pseudomonas putida (strain ATCC 47054 / DSM 6125 / CFBP 8728 / NCIMB 11950 / KT2440).